The sequence spans 355 residues: Fructose-1,6-bisphosphatase class 1 (355 aa).

4 residues coordinate Mg(2+): E94, D116, L118, and D119. Residues 119–122, N211, and 263–265 contribute to the substrate site; these read DGSS and YLY. E283 is a binding site for Mg(2+).

Belongs to the FBPase class 1 family. As to quaternary structure, homotetramer. Requires Mg(2+) as cofactor.

It localises to the cytoplasm. The catalysed reaction is beta-D-fructose 1,6-bisphosphate + H2O = beta-D-fructose 6-phosphate + phosphate. The protein operates within carbohydrate biosynthesis; Calvin cycle. In Rhodospirillum rubrum (strain ATCC 11170 / ATH 1.1.1 / DSM 467 / LMG 4362 / NCIMB 8255 / S1), this protein is Fructose-1,6-bisphosphatase class 1.